Here is a 336-residue protein sequence, read N- to C-terminus: Phosphate acyltransferase (336 aa).

The protein belongs to the PlsX family. Homodimer. Probably interacts with PlsY.

The protein resides in the cytoplasm. The catalysed reaction is a fatty acyl-[ACP] + phosphate = an acyl phosphate + holo-[ACP]. It participates in lipid metabolism; phospholipid metabolism. Its function is as follows. Catalyzes the reversible formation of acyl-phosphate (acyl-PO(4)) from acyl-[acyl-carrier-protein] (acyl-ACP). This enzyme utilizes acyl-ACP as fatty acyl donor, but not acyl-CoA. This chain is Phosphate acyltransferase, found in Pseudomonas fluorescens (strain ATCC BAA-477 / NRRL B-23932 / Pf-5).